The following is a 518-amino-acid chain: Glucose-1-phosphate adenylyltransferase large subunit 2, cytosolic (518 aa).

Belongs to the bacterial/plant glucose-1-phosphate adenylyltransferase family. In terms of assembly, heterotetramer composed of two small and two large subunits.

It is found in the cytoplasm. It localises to the cytosol. The enzyme catalyses alpha-D-glucose 1-phosphate + ATP + H(+) = ADP-alpha-D-glucose + diphosphate. Its pathway is glycan biosynthesis; starch biosynthesis. With respect to regulation, activated by 3'phosphoglycerate, inhibited by orthophosphate. Allosteric regulation. Inhibited by inorganic phosphate (Pi). In terms of biological role, involved in synthesis of starch. Catalyzes the synthesis of ADP-glucose, a molecule that serves as an activated glycosyl donor for alpha-1,4-glucan synthesis. Essential for starch synthesis in seed endosperm. Is essential for both catalytic and allosteric regulatory properties of the cytosolic heterotetramer enzyme. The chain is Glucose-1-phosphate adenylyltransferase large subunit 2, cytosolic from Oryza sativa subsp. japonica (Rice).